The following is a 296-amino-acid chain: Glutamate 5-kinase (296 aa).

An ATP-binding site is contributed by lysine 15. Residues serine 55, aspartate 159, and asparagine 186 each coordinate substrate. ATP-binding positions include 206–207 (SD) and 248–254 (TGGIATK).

This sequence belongs to the glutamate 5-kinase family.

Its subcellular location is the cytoplasm. The catalysed reaction is L-glutamate + ATP = L-glutamyl 5-phosphate + ADP. It functions in the pathway amino-acid biosynthesis; L-proline biosynthesis; L-glutamate 5-semialdehyde from L-glutamate: step 1/2. Functionally, catalyzes the transfer of a phosphate group to glutamate to form L-glutamate 5-phosphate. This Treponema pallidum (strain Nichols) protein is Glutamate 5-kinase.